The following is a 539-amino-acid chain: Phosphoenolpyruvate carboxykinase (ATP) (539 aa).

Positions 64, 206, and 212 each coordinate substrate. Residues Lys212, His231, and 247-255 (GLSGTGKTT) each bind ATP. The Mn(2+) site is built by Lys212 and His231. Asp268 contributes to the Mn(2+) binding site. Residues Glu296, Arg332, 448–449 (RI), and Thr454 contribute to the ATP site. Arg332 contributes to the substrate binding site.

It belongs to the phosphoenolpyruvate carboxykinase (ATP) family. In terms of assembly, monomer. Mn(2+) is required as a cofactor.

The protein resides in the cytoplasm. It carries out the reaction oxaloacetate + ATP = phosphoenolpyruvate + ADP + CO2. It participates in carbohydrate biosynthesis; gluconeogenesis. Functionally, involved in the gluconeogenesis. Catalyzes the conversion of oxaloacetate (OAA) to phosphoenolpyruvate (PEP) through direct phosphoryl transfer between the nucleoside triphosphate and OAA. This Hamiltonella defensa subsp. Acyrthosiphon pisum (strain 5AT) protein is Phosphoenolpyruvate carboxykinase (ATP).